The following is a 449-amino-acid chain: uncharacterized protein (449 aa).

The 59-residue stretch at 3–61 folds into the TRAM domain; that stretch reads VWQQGATIELRIDSLSHTGEGVGRWQDRVVFVADTVPGDRLRVRLTHVKRQYAHGKVLE. Positions 74, 80, 83, and 161 each coordinate [4Fe-4S] cluster. S-adenosyl-L-methionine-binding residues include Gln283, Tyr312, Glu333, and Asp378. Residue Cys405 is the Nucleophile of the active site.

This sequence belongs to the class I-like SAM-binding methyltransferase superfamily. RNA M5U methyltransferase family.

This is an uncharacterized protein from Thermosynechococcus vestitus (strain NIES-2133 / IAM M-273 / BP-1).